A 721-amino-acid chain; its full sequence is Glycine--tRNA ligase beta subunit (721 aa).

Belongs to the class-II aminoacyl-tRNA synthetase family. As to quaternary structure, tetramer of two alpha and two beta subunits.

Its subcellular location is the cytoplasm. The catalysed reaction is tRNA(Gly) + glycine + ATP = glycyl-tRNA(Gly) + AMP + diphosphate. The polypeptide is Glycine--tRNA ligase beta subunit (Sinorhizobium fredii (strain NBRC 101917 / NGR234)).